The primary structure comprises 940 residues: Gamma-aminobutyric acid type B receptor subunit 2 (940 aa).

The N-terminal stretch at 1-40 (MASPPSSGQPRPPPPPPPPARLLLPLLLSLLLSLAPGAWG) is a signal peptide. Over 41 to 482 (WARGAPRPPP…LRKISLPLYS (442 aa)) the chain is Extracellular. Residue Asn89 is glycosylated (N-linked (GlcNAc...) asparagine). 3 disulfide bridges follow: Cys107-Cys134, Cys236-Cys265, and Cys264-Cys301. N-linked (GlcNAc...) asparagine glycosylation is found at Asn297, Asn388, Asn403, and Asn452. Residues 483 to 503 (ILSALTILGMIMASAFLFFNI) form a helical membrane-spanning segment. Residues 504 to 521 (KNRNQKLIKMSSPYMNNL) lie on the Cytoplasmic side of the membrane. A helical membrane pass occupies residues 522 to 542 (IILGGMLSYASIFLFGLDGSF). Residues 543–550 (VSEKTFET) lie on the Extracellular side of the membrane. A helical membrane pass occupies residues 551–571 (LCTVRTWILTVGYTTAFGAMF). Residues 572-596 (AKTWRVHAIFKNVKMKKKIIKDQKL) lie on the Cytoplasmic side of the membrane. Residues 597-617 (LVIVGGMLLIDLCILICWQAV) traverse the membrane as a helical segment. Over 618 to 653 (DPLRRTVERYSMEPDPAGRDISIRPLLEHCENTHMT) the chain is Extracellular. A helical transmembrane segment spans residues 654-674 (IWLGIVYAYKGLLMLFGCFLA). Residues 675-690 (WETRNVSIPALNDSKY) are Cytoplasmic-facing. The chain crosses the membrane as a helical span at residues 691–711 (IGMSVYNVGIMCIIGAAVSFL). Residues 712–719 (TRDQPNVQ) lie on the Extracellular side of the membrane. The chain crosses the membrane as a helical span at residues 720-740 (FCIVALVIIFCSTITLCLVFV). Topologically, residues 741–940 (PKLITLRTNP…PSFRVMVSGL (200 aa)) are cytoplasmic. The interval 762-789 (TQNQKKEDSKTSTSVTSVNQASTSRLEG) is disordered. A compositionally biased stretch (polar residues) spans 772–786 (TSTSVTSVNQASTSR). Residues Ser775 and Ser778 each carry the phosphoserine modification. The stretch at 781 to 818 (QASTSRLEGLQSENHRLRMKITELDKDLEEVTMQLQDT) forms a coiled coil. Position 818 is a phosphothreonine (Thr818). 6 positions are modified to phosphoserine: Ser883, Ser892, Ser912, Ser915, Ser919, and Ser923.

The protein belongs to the G-protein coupled receptor 3 family. GABA-B receptor subfamily. Heterodimer of GABBR1 and GABBR2. Homodimers may form, but are inactive. Interacts (via C-terminus) with ATF4 (via leucine zipper domain).

It localises to the cell membrane. The protein localises to the postsynaptic cell membrane. Functionally, component of a heterodimeric G-protein coupled receptor for GABA, formed by GABBR1 and GABBR2. Within the heterodimeric GABA receptor, only GABBR1 seems to bind agonists, while GABBR2 mediates coupling to G proteins. Ligand binding causes a conformation change that triggers signaling via guanine nucleotide-binding proteins (G proteins) and modulates the activity of down-stream effectors, such as adenylate cyclase. Signaling inhibits adenylate cyclase, stimulates phospholipase A2, activates potassium channels, inactivates voltage-dependent calcium-channels and modulates inositol phospholipid hydrolysis. Plays a critical role in the fine-tuning of inhibitory synaptic transmission. Pre-synaptic GABA receptor inhibits neurotransmitter release by down-regulating high-voltage activated calcium channels, whereas postsynaptic GABA receptor decreases neuronal excitability by activating a prominent inwardly rectifying potassium (Kir) conductance that underlies the late inhibitory postsynaptic potentials. Not only implicated in synaptic inhibition but also in hippocampal long-term potentiation, slow wave sleep, muscle relaxation and antinociception. Interacts with KCTD8, KCTD12 and KCTD16; this interaction determines the pharmacology and kinetics of the receptor response, the KCTD proteins markedly accelerating the GABA-B response, although to different extents. This Mus musculus (Mouse) protein is Gamma-aminobutyric acid type B receptor subunit 2 (Gabbr2).